We begin with the raw amino-acid sequence, 152 residues long: MRPEAAGVREARGRLCHCPGDDPGRLPLPRGPESSIPAPWRPWMSPPPGDAELTRTERPCESWGDQHTSGSKGAFGFQHPVRLYLPVSKRQEYLQSSGEKVLASFPVQATIHFYNDDSESGSEEEQEEEAQPNHLQCLEAEVRDSAQEERAE.

Residues Met1–Gly24 show a composition bias toward basic and acidic residues. Disordered regions lie at residues Met1–Gly76 and Phe113–Glu152. Positions Trp40–Trp43 match the WRPW motif motif. The ripply homology domain stretch occupies residues His79 to Tyr114. A compositionally biased stretch (acidic residues) spans Asp116–Ala130. Positions Ala140–Glu152 are enriched in basic and acidic residues.

The protein belongs to the ripply family. Interacts with TBX1.

The protein resides in the nucleus. Acts as a transcriptional corepressor. Negative regulator of the transcriptional activity of TBX1. Plays a role in the development of the pharyngeal apparatus and derivatives. The chain is Protein ripply3 (Ripply3) from Mus musculus (Mouse).